Reading from the N-terminus, the 2310-residue chain is Peroxide stress-activated histidine kinase mak2 (2310 aa).

The region spanning 12 to 292 is the Protein kinase domain; that stretch reads DYAISQLGEF…SATDLCYTIV (281 aa). In terms of domain architecture, GAF spans 1450–1592; it reads RLGPLLTTVI…LLSQQIAISV (143 aa). The Histidine kinase domain maps to 1760-1986; that stretch reads NMSHELRTPF…TFWFHVQLRN (227 aa). Residue H1763 is modified to Phosphohistidine; by autocatalysis. The Response regulatory domain maps to 2180-2303; the sequence is YALIAEDNLI…QLVNAVREFV (124 aa). D2232 carries the 4-aspartylphosphate modification.

The protein resides in the cytoplasm. The enzyme catalyses ATP + protein L-histidine = ADP + protein N-phospho-L-histidine.. Involved in the control of the SAPK-dependent transcriptional response to peroxide stress. Regulates sty1 activity. This chain is Peroxide stress-activated histidine kinase mak2 (mak2), found in Schizosaccharomyces pombe (strain 972 / ATCC 24843) (Fission yeast).